The primary structure comprises 129 residues: Small ribosomal subunit protein uS11 (129 aa).

Belongs to the universal ribosomal protein uS11 family. Part of the 30S ribosomal subunit. Interacts with proteins S7 and S18. Binds to IF-3.

Located on the platform of the 30S subunit, it bridges several disparate RNA helices of the 16S rRNA. Forms part of the Shine-Dalgarno cleft in the 70S ribosome. This is Small ribosomal subunit protein uS11 from Buchnera aphidicola subsp. Baizongia pistaciae (strain Bp).